A 118-amino-acid chain; its full sequence is UPF0295 protein BT9727_0449 (118 aa).

The next 2 helical transmembrane spans lie at I12–F32 and F43–M63.

The protein belongs to the UPF0295 family.

The protein resides in the cell membrane. This Bacillus thuringiensis subsp. konkukian (strain 97-27) protein is UPF0295 protein BT9727_0449.